The sequence spans 994 residues: Valine--tRNA ligase (994 aa).

A 'HIGH' region motif is present at residues 43-53 (PNVTGTLHMGH). Residues 329–345 (QSGMPSGATSDTTNTPS) show a composition bias toward polar residues. A disordered region spans residues 329-355 (QSGMPSGATSDTTNTPSDPEASSAANQ). The short motif at 585 to 589 (KMSKS) is the 'KMSKS' region element. Lysine 588 serves as a coordination point for ATP. Residues 692 to 714 (AHSPAQHQAGQDGQDAPRTPQPR) form a disordered region. Residues 696 to 707 (AQHQAGQDGQDA) are compositionally biased toward low complexity. A coiled-coil region spans residues 928–994 (LIDVDAERVR…NGLRERRATL (67 aa)).

The protein belongs to the class-I aminoacyl-tRNA synthetase family. ValS type 1 subfamily. As to quaternary structure, monomer.

It localises to the cytoplasm. It catalyses the reaction tRNA(Val) + L-valine + ATP = L-valyl-tRNA(Val) + AMP + diphosphate. Catalyzes the attachment of valine to tRNA(Val). As ValRS can inadvertently accommodate and process structurally similar amino acids such as threonine, to avoid such errors, it has a 'posttransfer' editing activity that hydrolyzes mischarged Thr-tRNA(Val) in a tRNA-dependent manner. The chain is Valine--tRNA ligase from Xylella fastidiosa (strain 9a5c).